The primary structure comprises 579 residues: UvrABC system protein C (579 aa).

Positions 12–89 (DATGVYIFRD…IKRYRPPYNV (78 aa)) constitute a GIY-YIG domain. Residues 193–228 (QEVIEVLEEEMKEASERLEFERAARIRDQIESIREV) form the UVR domain.

Belongs to the UvrC family. As to quaternary structure, interacts with UvrB in an incision complex.

Its subcellular location is the cytoplasm. Functionally, the UvrABC repair system catalyzes the recognition and processing of DNA lesions. UvrC both incises the 5' and 3' sides of the lesion. The N-terminal half is responsible for the 3' incision and the C-terminal half is responsible for the 5' incision. In Methanothermobacter thermautotrophicus (strain ATCC 29096 / DSM 1053 / JCM 10044 / NBRC 100330 / Delta H) (Methanobacterium thermoautotrophicum), this protein is UvrABC system protein C.